A 552-amino-acid polypeptide reads, in one-letter code: Probable bifunctional methylthioribose-1-phosphate isomerase/methylthioribulose-1-phosphate dehydratase (552 aa).

Residues 1 to 333 (MRPIDDSSLT…VVTEHGVVHG (333 aa)) are methylthioribose-1-phosphate isomerase activity. Substrate-binding positions include 49–51 (RGA), arginine 91, and glutamine 195. Aspartate 236 acts as the Proton donor in catalysis. Residue 246–247 (NK) participates in substrate binding. The tract at residues 334 to 535 (TVAAEPGARI…AVCELVLRTG (202 aa)) is methylthioribulose-1-phosphate dehydratase activity. Histidine 427 and histidine 429 together coordinate Zn(2+).

The protein in the N-terminal section; belongs to the eIF-2B alpha/beta/delta subunits family. MtnA subfamily. In the C-terminal section; belongs to the aldolase class II family. MtnB subfamily. Zn(2+) is required as a cofactor.

The enzyme catalyses 5-(methylsulfanyl)-alpha-D-ribose 1-phosphate = 5-(methylsulfanyl)-D-ribulose 1-phosphate. It carries out the reaction 5-(methylsulfanyl)-D-ribulose 1-phosphate = 5-methylsulfanyl-2,3-dioxopentyl phosphate + H2O. The protein operates within amino-acid biosynthesis; L-methionine biosynthesis via salvage pathway; L-methionine from S-methyl-5-thio-alpha-D-ribose 1-phosphate: step 1/6. It functions in the pathway amino-acid biosynthesis; L-methionine biosynthesis via salvage pathway; L-methionine from S-methyl-5-thio-alpha-D-ribose 1-phosphate: step 2/6. Functionally, bifunctional protein that catalyzes the interconversion of methylthioribose-1-phosphate (MTR-1-P) into methylthioribulose-1-phosphate (MTRu-1-P), and the dehydration of methylthioribulose-1-phosphate (MTRu-1-P) into 2,3-diketo-5-methylthiopentyl-1-phosphate (DK-MTP-1-P). The sequence is that of Probable bifunctional methylthioribose-1-phosphate isomerase/methylthioribulose-1-phosphate dehydratase (mtnAB) from Nocardia farcinica (strain IFM 10152).